A 108-amino-acid polypeptide reads, in one-letter code: Colipase B (108 aa).

The first 13 residues, 1–13, serve as a signal peptide directing secretion; the sequence is LALLLVALAVAYA. Positions 14–18 are cleaved as a propeptide — enterostatin, activation peptide; it reads VPDPR. 5 disulfides stabilise this stretch: Cys30–Cys41, Cys36–Cys52, Cys40–Cys74, Cys62–Cys82, and Cys76–Cys100. Trp65 is a taurodeoxycholate binding site.

This sequence belongs to the colipase family. In terms of assembly, forms a 1:1 stoichiometric complex with pancreatic lipase. As to expression, expressed by the pancreas.

Its subcellular location is the secreted. Its function is as follows. Colipase is a cofactor of pancreatic lipase. It allows the lipase to anchor itself to the lipid-water interface. Without colipase the enzyme is washed off by bile salts, which have an inhibitory effect on the lipase. Functionally, enterostatin has a biological activity as a satiety signal. The polypeptide is Colipase B (CLPS2) (Equus caballus (Horse)).